Consider the following 240-residue polypeptide: Ribosomal RNA small subunit methyltransferase G (240 aa).

Residues G80, F85, 103 to 105 (DSS), 131 to 132 (AE), and R150 each bind S-adenosyl-L-methionine.

This sequence belongs to the methyltransferase superfamily. RNA methyltransferase RsmG family.

It is found in the cytoplasm. In terms of biological role, specifically methylates the N7 position of a guanine in 16S rRNA. The polypeptide is Ribosomal RNA small subunit methyltransferase G (Thermoanaerobacter pseudethanolicus (strain ATCC 33223 / 39E) (Clostridium thermohydrosulfuricum)).